The chain runs to 332 residues: Polygalacturonase inhibitor 1 (332 aa).

Positions 1–24 (MASTASFMLAVLLAVAVAAAPARA) are cleaved as a signal peptide. 2 cysteine pairs are disulfide-bonded: Cys27–Cys58 and Cys59–Cys66. LRR repeat units lie at residues 72 to 96 (VNNV…GLTA), 97 to 118 (LMSL…CLTA), 119 to 142 (LSNL…SLAR), 143 to 166 (IRSL…SFSD), 167 to 192 (LPNL…VQGQ), 193 to 215 (FRSL…AQDE), 216 to 236 (INTV…LFAA), 237 to 259 (GRPI…KLVF), 260 to 283 (PPEL…SLAA), and 284 to 310 (LSTL…VIRH). Asn131 is a glycosylation site (N-linked (GlcNAc...) asparagine). 3 cysteine pairs are disulfide-bonded: Cys298-Cys312, Cys298-Cys320, and Cys320-Cys329.

The protein belongs to the polygalacturonase-inhibiting protein family. In terms of tissue distribution, highly expressed in calli, immature and mature panicles, and in three inner floral organs: lodicules, stamens and carpels. Expressed at low level in seedling roots and mature stems.

The protein localises to the secreted. The protein resides in the cell wall. In terms of biological role, inhibitor of fungal polygalacturonase. Regulates floral organ number. This Oryza sativa subsp. japonica (Rice) protein is Polygalacturonase inhibitor 1.